Consider the following 161-residue polypeptide: Probable endopeptidase HI_1314 (161 aa).

Positions 1-18 are cleaved as a signal peptide; sequence MKVYKSFLIATASLFLFA. Cysteine 19 carries the N-palmitoyl cysteine lipid modification. The S-diacylglycerol cysteine moiety is linked to residue cysteine 19. A NlpC/P60 domain is found at 39–161; the sequence is IMAIAMLSEQ…SKAFWQVRRI (123 aa). The active-site Nucleophile is the cysteine 69. Histidine 122 (proton acceptor) is an active-site residue. The active site involves histidine 134.

The protein belongs to the peptidase C40 family.

It is found in the cell membrane. The protein is Probable endopeptidase HI_1314 of Haemophilus influenzae (strain ATCC 51907 / DSM 11121 / KW20 / Rd).